Reading from the N-terminus, the 32-residue chain is Photosystem II reaction center protein T (32 aa).

Position 1 is an N-formylmethionine (methionine 1). Residues 1–2 (ME) lie on the Lumenal side of the membrane. The helical transmembrane segment at 3–23 (TITYVFIFACIIALFFFAIFF) threads the bilayer. Topologically, residues 24-32 (REPPRITKK) are cytoplasmic.

The protein belongs to the PsbT family. PSII is composed of 1 copy each of membrane proteins PsbA, PsbB, PsbC, PsbD, PsbE, PsbF, PsbH, PsbI, PsbJ, PsbK, PsbL, PsbM, PsbT, PsbX, PsbY, PsbZ, Psb30/Ycf12, PsbO, CyanoQ (PsbQ), PsbU, PsbV and a large number of cofactors. It forms dimeric complexes. Part of a photosystem II (PSII) assembly intermediate complex PSII-I; crystallized from a strain deleted of psbJ, it forms monomeric PSII before addition of the oxygen evolving complex. PSII-I includes 3 assembly factors not found in mature PSII (Psb27, Psb28 and Psb34). PSII binds multiple chlorophylls, carotenoids and specific lipids. serves as cofactor.

The protein localises to the cellular thylakoid membrane. Found at the monomer-monomer interface of the photosystem II (PS II) dimer, plays a role in assembly and dimerization of PSII. PSII is a light-driven water plastoquinone oxidoreductase, using light energy to abstract electrons from H(2)O, generating a proton gradient subsequently used for ATP formation. The sequence is that of Photosystem II reaction center protein T from Thermosynechococcus vestitus (strain NIES-2133 / IAM M-273 / BP-1).